A 1119-amino-acid chain; its full sequence is SH3 and PX domain-containing protein 2A (1119 aa).

The 125-residue stretch at 4-128 (RTVLDVKVVD…RFFETKPDDI (125 aa)) folds into the PX domain. SH3 domains are found at residues 149–208 (MVLE…SQSG) and 249–308 (SREE…KLKD). Disordered stretches follow at residues 388–429 (SSAT…PPRR), 494–595 (APSS…SNPA), 641–815 (SSDD…HESV), 914–941 (NLRSMSNPSPPIPSKPPGGFSKPTAMLN), and 957–1004 (RPQS…SSFT). The SH3 3 domain maps to 445–504 (TVEAEYYTIAEFQSSISDGISFRGGQKADVIEKNSGGWWYVQIGDTEGWAPSSYIDKRKK). 2 stretches are compositionally biased toward basic and acidic residues: residues 581–590 (PKPEPRKFEI) and 688–718 (GRAERHSSKLFSDESARNPKREPVMRKDVEI). Residues 779–802 (TASVVSSEDSTSSRSTSDLSSVYS) are compositionally biased toward low complexity. The segment covering 806–815 (RGGESDHESV) has biased composition (basic and acidic residues). The SH3 4 domain maps to 812–871 (HESVLFRTTDAYERAQESELSFPAGVEVEVLEKQESGWWFVRWGSDEGWVPTFYLEPIKH). The 62-residue stretch at 1058–1119 (NLREVYVSIA…VPSNYLERKK (62 aa)) folds into the SH3 5 domain.

It belongs to the SH3PXD2 family. Tyrosine phosphorylated.

It localises to the cytoplasm. The protein localises to the cell projection. Its subcellular location is the podosome. Functionally, adapter protein involved in invadopodia and podosome formation and extracellular matrix degradation. The sequence is that of SH3 and PX domain-containing protein 2A (sh3pxd2a) from Danio rerio (Zebrafish).